Here is a 316-residue protein sequence, read N- to C-terminus: tRNA uridine(34) hydroxylase (316 aa).

Residues 123–217 (LDEDTVVIDA…YGKNPETRGE (95 aa)) form the Rhodanese domain. The active-site Cysteine persulfide intermediate is the Cys-177.

Belongs to the TrhO family.

It carries out the reaction uridine(34) in tRNA + AH2 + O2 = 5-hydroxyuridine(34) in tRNA + A + H2O. In terms of biological role, catalyzes oxygen-dependent 5-hydroxyuridine (ho5U) modification at position 34 in tRNAs. This is tRNA uridine(34) hydroxylase from Enterococcus faecalis (strain ATCC 700802 / V583).